A 68-amino-acid chain; its full sequence is Molybdenum-pterin-binding protein 2 (68 aa).

Positions 2–68 (SISARNQLKG…VKSTDVMILA (67 aa)) constitute a Mop domain.

Its function is as follows. Binds one mole of molybdenum per mole of protein and contains a pterin. The sequence is that of Molybdenum-pterin-binding protein 2 (mopII) from Clostridium pasteurianum.